We begin with the raw amino-acid sequence, 260 residues long: Imidazole glycerol phosphate synthase subunit HisF (260 aa).

Active-site residues include D11 and D130.

This sequence belongs to the HisA/HisF family. Heterodimer of HisH and HisF.

Its subcellular location is the cytoplasm. It carries out the reaction 5-[(5-phospho-1-deoxy-D-ribulos-1-ylimino)methylamino]-1-(5-phospho-beta-D-ribosyl)imidazole-4-carboxamide + L-glutamine = D-erythro-1-(imidazol-4-yl)glycerol 3-phosphate + 5-amino-1-(5-phospho-beta-D-ribosyl)imidazole-4-carboxamide + L-glutamate + H(+). It functions in the pathway amino-acid biosynthesis; L-histidine biosynthesis; L-histidine from 5-phospho-alpha-D-ribose 1-diphosphate: step 5/9. In terms of biological role, IGPS catalyzes the conversion of PRFAR and glutamine to IGP, AICAR and glutamate. The HisF subunit catalyzes the cyclization activity that produces IGP and AICAR from PRFAR using the ammonia provided by the HisH subunit. The polypeptide is Imidazole glycerol phosphate synthase subunit HisF (Psychrobacter arcticus (strain DSM 17307 / VKM B-2377 / 273-4)).